A 133-amino-acid polypeptide reads, in one-letter code: Salivary cystatin-L2 (133 aa).

Positions 1–18 (MTSSLALVLLLGGAAVCA) are cleaved as a signal peptide. Residues 34–118 (DDPKYLELAH…RTCTAVIYEN (85 aa)) enclose the Cystatin domain.

The protein belongs to the cystatin family. As to expression, salivary gland, midgut and other tissues.

It is found in the secreted. Its function is as follows. Inhibitor of cysteine proteinases. Inhibits host cathepsin L (CTSL) and S (CTSS). Modulates production of various cytokines and chemokines in lipopolysaccharide (LPS)-stimulated mouse dendritic cell. Suppresses maturation of mouse bone-marrow-derived dendritic cells (BMDCs). In terms of biological role, (Microbial infection) Modulates Borrelia miyamotoi-stimulated immune responses in mice by suppressing activities of host dendritic and T-cells. In Ixodes persulcatus (Taiga tick), this protein is Salivary cystatin-L2.